We begin with the raw amino-acid sequence, 1215 residues long: MNHIIQDKYIPQQLLYFLAGRRCCQQFPCTFRTSEHEAFANNARSLGLRSQVVHVNGNSCVKVYKQACRHYLEEPKTLVLSSGATLNMFTLLSRKSLMGKEDLELYADLVSMKANASDLPSLHLPLPAIRPPNLRFWTEAQLNFLTAFLGHSLSDEILQSLYASRVIVYNAALCWDKSVFLPLVILDDCRNKKSNVKIMCIERQAILATYNSQRTANFFGEQLGETVGIQLPYFSAVSSSTFIIYSTAQYFLRSLTSQQFRNISHLVVNDVHLHDPYTDILLSEIRMALSSHQNLRVVLLSQMGNPKKFTDFFGEGLQLNMIKQPEVAPRVSYLNELHSCIALAGIHKGPDIYKEIPEAFRANNPRNEQMDKCLQAYGELGTDAALRPFLYAVNYDLAPVNYRHSLTGKTAVHFASELNKANHLRLLLFMGADPYIVDLFQQNAISLAAMNGNHECIDVLNSYSLHGYVVKSAKPDFVDYDLIIDIMYLLRTKPEYSPGEYSPGNILIILPTYYHIVKLNYMILSHCLTGSLQECSIFLLYDNMRNDYLQALVNASDETVKVVLATDIIESLCLKVPFKYQIDTACRLNNVYDTTSCSGDDRFEWVAKDALLRRELILQPNKGDVQCFRLISKEAYEELSETSQPSLQTMQLDKICLAVKLLSPNTIISEYLGITISPPPLINVHHAVQFLKKIDVLDDAEDVTWLGCRLMDIPVSCQLGRMLIFGILLRCLDPILTIVSSLSTADPLGIPFTEDIDNLWDRFTIYIQNSIKKERTYLSDNQFSDHFIFVRLYKEWQNRMHNRTPPLYLKDEYEFMLNGLMEQLTSIRSEIVSSLRAANLIHSRGKLSMNNLNQMSCNWHMVKAALTGGMYPNIYAVDTRKSSLKSAFSGNVSMHPNTVLRDFLEPLNISAQSFRTPWIVCNRQKSHIVYATLVVPLAVAMFSGHPRIRLSPICDSEMSLTDRNVNVFIDEWIWMVMSKATAEMVMRTRYYFFKMYHDLLKHCSELDMWRRDCEPVSQYTVLTDTLSKIFESEDGFVGFFKPPPITFLPTPQLPSLYLLSVNAHFSWAREVEENMLSKPHHFNSHFIERQFFVLYAGGDCEEFHSRNTPAFIESVLGKFVRPIDTPNRHIFVILYRKDPDMMLSISRAKFVNGVFMLQEYFRNNIPVFEILDACVSLNVQTPVFDGRLMSALIDKRVGNLIMELFAFRHHWIHKR.

The stretch at 407–439 is one ANK repeat; that stretch reads TGKTAVHFASELNKANHLRLLLFMGADPYIVDL. Position 898 is a phosphothreonine (Thr-898).

In terms of assembly, part of a complex composed of at least mei-P26, bam, bgcn and Sxl; this complex is involved in translational repression of nanos mRNA. Interacts with bam (via C-terminus); the interaction is direct. Interacts with mei-P26; the interaction is direct and does not require bam. Weakly interacts with wh/wuho; this interaction may be required for the function or formation of the mei-P26-bgcn-bam-Sxl complex. Part of a complex composed of at least tut, bam and bgcn; complex formation does not require RNA. Interacts with tut; the interaction is indirect and is mediated by bam. As part of the bam-bgcn-tut complex associates with twin; may recruit the CCR4-NOT1 deadenylation complex to mRNA 3'UTRs to mediate post-transcriptional regulation of expression. In terms of tissue distribution, expressed in testis and in 5-8 germline stem cells of ovaries, immediately adjacent to terminal filament. Expressed in ovarian germline cells throughout the germarium (at protein level).

Forms a complex with tut and bam involved in 3'UTR-dependent post-transcriptional repression of several 3'-RNA processing factors, which promotes germline stem cell lineage differentiation and mitosis-to-meiosis transition. Part of a complex with bam involved in 3'-UTR-dependent translational repression of a subset of mRNAs, including those for mei-P26, nanos and shg/E-cadherin; may act as a promiscuous RNA-binding protein tethering bam to its target mRNAs. Required for regulating the progression of gonialblast cells through transit amplification and differentiation into gametes. The polypeptide is Protein benign gonial cell neoplasm (Drosophila melanogaster (Fruit fly)).